Consider the following 441-residue polypeptide: 3-phosphoshikimate 1-carboxyvinyltransferase (441 aa).

Positions 22, 23, and 27 each coordinate 3-phosphoshikimate. K22 is a binding site for phosphoenolpyruvate. Phosphoenolpyruvate-binding residues include G95 and R123. Residues S168, Q170, D321, and K348 each coordinate 3-phosphoshikimate. Q170 contributes to the phosphoenolpyruvate binding site. The active-site Proton acceptor is D321. The phosphoenolpyruvate site is built by R352 and R400.

This sequence belongs to the EPSP synthase family. As to quaternary structure, monomer.

The protein resides in the cytoplasm. The catalysed reaction is 3-phosphoshikimate + phosphoenolpyruvate = 5-O-(1-carboxyvinyl)-3-phosphoshikimate + phosphate. It functions in the pathway metabolic intermediate biosynthesis; chorismate biosynthesis; chorismate from D-erythrose 4-phosphate and phosphoenolpyruvate: step 6/7. Its function is as follows. Catalyzes the transfer of the enolpyruvyl moiety of phosphoenolpyruvate (PEP) to the 5-hydroxyl of shikimate-3-phosphate (S3P) to produce enolpyruvyl shikimate-3-phosphate and inorganic phosphate. This chain is 3-phosphoshikimate 1-carboxyvinyltransferase, found in Novosphingobium aromaticivorans (strain ATCC 700278 / DSM 12444 / CCUG 56034 / CIP 105152 / NBRC 16084 / F199).